A 142-amino-acid chain; its full sequence is MTLTQAEKAAVITIWTKVATQADAIGAESLERLFSSYPQTKTYFPHFDLSQGSTQLRGHGSKVMNAIGEAVKNIDDIRGALAKLSELHAYILRVDPVNFKLLCHCILCSVAARYPSDFTPEVHAAWDKFLSSVSSVLTEKYR.

In terms of domain architecture, Globin spans 2–142; it reads TLTQAEKAAV…VSSVLTEKYR (141 aa). Residues His59 and His88 each contribute to the heme b site.

This sequence belongs to the globin family.

In terms of biological role, the pi' chain is the counterpart of the alpha chain in the major early embryonic hemoglobin P. The protein is Hemoglobin subunit pi of Cairina moschata (Muscovy duck).